A 382-amino-acid polypeptide reads, in one-letter code: MTAPLKTFDPIIVDVALGERAYDIVIGRGVLASLGQRIAALRPGVRTAIVTDRTVAAHWLKPTEAILAEAGIPSSTIVVEEGEGSKTYAGLEKVSEALIAAKIERNDLVIALGGGVVGDLAGFAAAILRRGVNFVQVPTSLLAQVDSSVGGKTGINSPQGKNLLGAFHQPVLVIADTAVLDTLSPRQFRAGYAEVAKYGLLGDAGFFTWLEANHADIVTGGAAREHAVATSCRAKAAIVARDERETGDRALLNLGHTFGHALEAITGFSDRLFHGEGVAVGMVLAAQFSAELGMLPPDDVTRIERHLAAVGLPTHLQDIAGFAQEGIGDADRLLALMAQDKKVKRGKLTFILMEAIGRAVIAKDVDPARVRDFLQAKLHRRG.

NAD(+) is bound by residues 81–86 (EGEGSK), 115–119 (GVVGD), 139–140 (TS), Lys152, and Lys161. Zn(2+) contacts are provided by Glu194, His256, and His274.

It belongs to the sugar phosphate cyclases superfamily. Dehydroquinate synthase family. Requires Co(2+) as cofactor. Zn(2+) serves as cofactor. It depends on NAD(+) as a cofactor.

Its subcellular location is the cytoplasm. It carries out the reaction 7-phospho-2-dehydro-3-deoxy-D-arabino-heptonate = 3-dehydroquinate + phosphate. Its pathway is metabolic intermediate biosynthesis; chorismate biosynthesis; chorismate from D-erythrose 4-phosphate and phosphoenolpyruvate: step 2/7. Its function is as follows. Catalyzes the conversion of 3-deoxy-D-arabino-heptulosonate 7-phosphate (DAHP) to dehydroquinate (DHQ). This Bradyrhizobium sp. (strain BTAi1 / ATCC BAA-1182) protein is 3-dehydroquinate synthase.